Consider the following 155-residue polypeptide: Large ribosomal subunit protein uL22c (155 aa).

This sequence belongs to the universal ribosomal protein uL22 family. Part of the 50S ribosomal subunit.

Its subcellular location is the plastid. It localises to the chloroplast. Functionally, this protein binds specifically to 23S rRNA. In terms of biological role, the globular domain of the protein is located near the polypeptide exit tunnel on the outside of the subunit, while an extended beta-hairpin is found that lines the wall of the exit tunnel in the center of the 70S ribosome. In Solanum tuberosum (Potato), this protein is Large ribosomal subunit protein uL22c (rpl22).